Consider the following 57-residue polypeptide: MGNNEEYFIDVNDLSIDVFDVVEQGGAVTALTADHGMPEVGASTNCFCYICCSCSSN.

Positions 1–42 (MGNNEEYFIDVNDLSIDVFDVVEQGGAVTALTADHGMPEVGA) are cleaved as a propeptide — removed in mature form. A cross-link (5-methyloxazole-4-carboxylic acid (Ser-Thr)) is located at residues 43–44 (ST). A cross-link (pyridine-2,5-dicarboxylic acid (Ser-Cys) (with S-53)) is located at residues 43 to 52 (STNCFCYICC). The segment at residues 43 to 53 (STNCFCYICCS) is a cross-link (pyridine-2,5-dicarboxylic acid (Ser-Ser) (with C-52)). The thiazole-4-carboxylic acid (Asn-Cys) cross-link spans 45-46 (NC). The segment at residues 47–48 (FC) is a cross-link (thiazoline-4-carboxylic acid (Phe-Cys)). Residue Ile50 is modified to 5-hydroxy-3-methylproline (Ile). A cross-link (thiazole-4-carboxylic acid (Ile-Cys)) is located at residues 50-51 (IC). Positions 51–52 (CC) form a cross-link, thiazole-4-carboxylic acid (Cys-Cys). Positions 53-54 (SC) form a cross-link, thiazole-4-carboxylic acid (Ser-Cys). 2 positions are modified to 2,3-didehydroalanine (Ser): Ser55 and Ser56. A propeptide (removed in mature form) is located at residue Asn57.

In terms of processing, maturation of thiazole and oxazole containing antibiotics involves the enzymatic condensation of a Cys, Ser or Thr with the alpha-carbonyl of the preceding amino acid to form a thioether or ether bond, then dehydration to form a double bond with the alpha-amino nitrogen. Thiazoline or oxazoline ring are dehydrogenated to form thiazole or oxazole rings. Maturation of pyridinyl containing antibiotics involves the cross-linking of a Ser and a Cys-Ser pair usually separated by 7 or 8 residues along the peptide chain. The Ser residues are dehydrated to didehydroalanines, then bonded between their beta carbons. The alpha carbonyl of the Cys condenses with alpha carbon of the first Ser to form a pyridinyl ring. The ring may be multiply dehydrogenated to form a pyridine ring with loss of the amino nitrogen of the first Ser.

Its subcellular location is the secreted. Functionally, has bacteriocidal activity against both aerobic and anaerobic Gram-positive bacteria. Inhibits growth of B.subtilis (MIC=0.047 ug/ml) and methicillin-resistant S.aureus (MRSA) (MIC=0.047 ug/ml). Has poor activity against Gram-negative bacteria, with the exception of B.fragilis. Inhibits bacterial protein biosynthesis by acting on elongation factor Tu (EF-Tu). Full antibiotic activity depends on the presence of the modified residue Ile-50. The polypeptide is Thiocillin GE37468 (getA) (Streptomyces sp).